A 409-amino-acid polypeptide reads, in one-letter code: Mitochondrial protein import protein MAS5 (409 aa).

Positions 1–172 (MVKETKFYDI…NGQGIKFVTR (172 aa)) are necessary for HAP1 repression in the absence of heme. Residues 4-72 (ETKFYDILGV…RDIYDQFGED (69 aa)) enclose the J domain. Substrate is bound by residues I116 and 135-137 (LAL). Residues 130 to 213 (GRTAKLALNK…CNGKKVENER (84 aa)) form a CR-type zinc finger. Residues C143, C146, C159, C162, C185, and C188 each coordinate Zn(2+). CXXCXGXG motif repeat units lie at residues 143–150 (CKECEGRG), 159–166 (CTSCNGQG), and 185–192 (CDVCHGTG). Residue K198 forms a Glycyl lysine isopeptide (Lys-Gly) (interchain with G-Cter in ubiquitin) linkage. Residues C201 and C204 each contribute to the Zn(2+) site. The stretch at 201–208 (CKSCNGKK) is one CXXCXGXG motif repeat. Substrate is bound by residues 215–216 (IL) and 247–249 (VVF). A disordered region spans residues 382–409 (RTRASRGGANYDSDEEEQGGEGVQCASQ). Residue C406 is modified to Cysteine methyl ester. The S-farnesyl cysteine moiety is linked to residue C406. Positions 407–409 (ASQ) are cleaved as a propeptide — removed in mature form.

As to quaternary structure, homodimer. Interacts with HAP1. Component of the HMC including HAP1, SRO9 and YDJ1.

The protein localises to the cytoplasm. Its subcellular location is the perinuclear region. Probably involved in mitochondrial protein import. Is also required for efficient translocation of pre-pro-alpha-factor. Involved in heme regulation of HAP1, as a component of the high-molecular-weight (HMC) complex. The polypeptide is Mitochondrial protein import protein MAS5 (YDJ1) (Saccharomyces cerevisiae (strain ATCC 204508 / S288c) (Baker's yeast)).